A 137-amino-acid polypeptide reads, in one-letter code: Succinate dehydrogenase cytochrome b560 subunit (137 aa).

2 consecutive transmembrane segments (helical) span residues Ala-31 to Leu-51 and Phe-60 to Leu-80. Residue His-85 coordinates heme. A helical transmembrane segment spans residues Val-106 to Ile-126.

This sequence belongs to the cytochrome b560 family. Forms part of complex II containing four subunits: a 70 kDa flavoprotein (FP), a 27 kDa iron-sulfur protein (IP), a cytochrome B and a membrane-anchoring protein. The cofactor is heme.

The protein resides in the mitochondrion inner membrane. It functions in the pathway carbohydrate metabolism; tricarboxylic acid cycle. In terms of biological role, membrane-anchoring subunit of succinate dehydrogenase (SDH) that is involved in complex II of the mitochondrial electron transport chain and is responsible for transferring electrons from succinate to ubiquinone (coenzyme Q). The polypeptide is Succinate dehydrogenase cytochrome b560 subunit (SDH3) (Marchantia polymorpha (Common liverwort)).